The primary structure comprises 331 residues: Probable allantoicase (331 aa).

It belongs to the allantoicase family.

The enzyme catalyses allantoate + H2O = (S)-ureidoglycolate + urea. It functions in the pathway nitrogen metabolism; (S)-allantoin degradation; (S)-ureidoglycolate from allantoate (aminidohydrolase route): step 1/1. The protein is Probable allantoicase of Pseudomonas fluorescens (strain Pf0-1).